The following is a 927-amino-acid chain: Phosphoenolpyruvate carboxylase (927 aa).

Residues H160 and K589 contribute to the active site.

It belongs to the PEPCase type 1 family. Mg(2+) serves as cofactor.

The catalysed reaction is oxaloacetate + phosphate = phosphoenolpyruvate + hydrogencarbonate. Functionally, forms oxaloacetate, a four-carbon dicarboxylic acid source for the tricarboxylic acid cycle. The polypeptide is Phosphoenolpyruvate carboxylase (Rhodopseudomonas palustris (strain BisA53)).